The chain runs to 229 residues: 7-cyano-7-deazaguanine synthase (229 aa).

Residue 7 to 17 (LSGGLDSSTIL) coordinates ATP. Zn(2+)-binding residues include cysteine 191, cysteine 199, cysteine 202, and cysteine 205.

Belongs to the QueC family. It depends on Zn(2+) as a cofactor.

It carries out the reaction 7-carboxy-7-deazaguanine + NH4(+) + ATP = 7-cyano-7-deazaguanine + ADP + phosphate + H2O + H(+). The protein operates within purine metabolism; 7-cyano-7-deazaguanine biosynthesis. Functionally, catalyzes the ATP-dependent conversion of 7-carboxy-7-deazaguanine (CDG) to 7-cyano-7-deazaguanine (preQ(0)). The chain is 7-cyano-7-deazaguanine synthase from Nostoc sp. (strain PCC 7120 / SAG 25.82 / UTEX 2576).